We begin with the raw amino-acid sequence, 345 residues long: Putative mediator of RNA polymerase II transcription subunit 7 (345 aa).

Low complexity-rich tracts occupy residues 1–27 and 88–126; these read MNTSQQQQQQQQQQQQQQQQQQQTPQQ and NNNNNNNNNNNNNNNNNNNNNNNNNNNNNNNNNNNNNNN. 2 disordered regions span residues 1-130 and 292-315; these read MNTS…KATT and TPLPTNITSPTKNLMSPTKLNNSQ.

This sequence belongs to the Mediator complex subunit 7 family. Component of the Mediator complex.

The protein localises to the nucleus. Component of the Mediator complex, a coactivator involved in the regulated transcription of nearly all RNA polymerase II-dependent genes. Mediator functions as a bridge to convey information from gene-specific regulatory proteins to the basal RNA polymerase II transcription machinery. Mediator is recruited to promoters by direct interactions with regulatory proteins and serves as a scaffold for the assembly of a functional preinitiation complex with RNA polymerase II and the general transcription factors. The protein is Putative mediator of RNA polymerase II transcription subunit 7 (med7) of Dictyostelium discoideum (Social amoeba).